Consider the following 130-residue polypeptide: Small ribosomal subunit protein uS9 (130 aa).

The protein belongs to the universal ribosomal protein uS9 family.

The polypeptide is Small ribosomal subunit protein uS9 (Delftia acidovorans (strain DSM 14801 / SPH-1)).